Reading from the N-terminus, the 94-residue chain is Large ribosomal subunit protein uL23 (94 aa).

This sequence belongs to the universal ribosomal protein uL23 family. Part of the 50S ribosomal subunit. Contacts protein L29, and trigger factor when it is bound to the ribosome.

Its function is as follows. One of the early assembly proteins it binds 23S rRNA. One of the proteins that surrounds the polypeptide exit tunnel on the outside of the ribosome. Forms the main docking site for trigger factor binding to the ribosome. The polypeptide is Large ribosomal subunit protein uL23 (Treponema pallidum (strain Nichols)).